Here is a 344-residue protein sequence, read N- to C-terminus: Trace amine-associated receptor 8b (344 aa).

Residues Met-1–Arg-31 lie on the Extracellular side of the membrane. N-linked (GlcNAc...) asparagine glycans are attached at residues Asn-4 and Asn-18. Disulfide bonds link Cys-21–Cys-185 and Cys-104–Cys-189. The chain crosses the membrane as a helical span at residues Val-32–Val-52. At Val-53–Asn-67 the chain is on the cytoplasmic side. Residues Phe-68 to Ser-88 traverse the membrane as a helical segment. Over Met-89–Asp-111 the chain is Extracellular. A helical membrane pass occupies residues Val-112–Ala-132. Residues Val-133–Ser-146 lie on the Cytoplasmic side of the membrane. The helical transmembrane segment at Val-147–Phe-167 threads the bilayer. Residues Tyr-168–Gln-195 lie on the Extracellular side of the membrane. A helical membrane pass occupies residues Asp-196–Tyr-216. At Ser-217 to Thr-260 the chain is on the cytoplasmic side. The helical transmembrane segment at Leu-261–Val-281 threads the bilayer. Residue Asp-282 is a topological domain, extracellular. A helical membrane pass occupies residues Ala-283–Tyr-303. The Cytoplasmic portion of the chain corresponds to Asn-304 to Glu-344.

The protein belongs to the G-protein coupled receptor 1 family. In terms of tissue distribution, specifically expressed in neurons of the olfactory epithelium.

Its subcellular location is the cell membrane. Functionally, olfactory receptor specific for trace amines. Trace amine compounds are enriched in animal body fluids and act on trace amine-associated receptors (TAARs) to elicit both intraspecific and interspecific innate behaviors. Ligand-binding causes a conformation change that triggers signaling via G alpha proteins, possibly G(i)/G(o) G alpha proteins. In Mus musculus (Mouse), this protein is Trace amine-associated receptor 8b.